The chain runs to 654 residues: Mitochondrial-processing peptidase subunit alpha-1 (654 aa).

Residues 73–94 form a disordered region; that stretch reads SSSSYKGNNNNNNKLSYTTSSN. Positions 381–446 form a coiled coil; sequence HKNHLKSQLQ…EQLELQQVKE (66 aa).

The protein belongs to the peptidase M16 family. Heterodimer of alpha and beta subunits, forming the mitochondrial processing protease (MPP) in which subunit alpha is involved in substrate recognition and binding and subunit beta is the catalytic subunit.

The protein resides in the mitochondrion matrix. Its function is as follows. Substrate recognition and binding subunit of the essential mitochondrial processing protease (MPP), which cleaves the mitochondrial sequence off newly imported precursors proteins. In Dictyostelium discoideum (Social amoeba), this protein is Mitochondrial-processing peptidase subunit alpha-1 (mppA1).